The sequence spans 619 residues: Putative transcription activator BRLF1 homolog (619 aa).

Disordered regions lie at residues L301–S389 and G563–M603. 2 stretches are compositionally biased toward low complexity: residues E371 to S389 and Q567 to P582. The segment covering Q589–P598 has biased composition (polar residues).

This sequence belongs to the herpesviridae TAF50 family.

Its function is as follows. Transcription activation. The sequence is that of Putative transcription activator BRLF1 homolog (50) from Connochaetes taurinus (Blue wildebeest).